The chain runs to 244 residues: Putative ribosomal recycling factor, mitochondrial (244 aa).

It belongs to the RRF family.

The protein localises to the mitochondrion. Necessary for protein synthesis in mitochondria. Functions as a ribosome recycling factor in mitochondria. The sequence is that of Putative ribosomal recycling factor, mitochondrial (rrf1) from Schizosaccharomyces pombe (strain 972 / ATCC 24843) (Fission yeast).